Consider the following 165-residue polypeptide: Phosphopantetheine adenylyltransferase (165 aa).

Ser-9 contacts substrate. ATP is bound by residues 9-10 (SF) and His-17. Substrate contacts are provided by Lys-41, Ile-75, and Arg-89. Residues 90 to 92 (GVR), Glu-100, and 125 to 131 (YLFVRSD) each bind ATP.

This sequence belongs to the bacterial CoaD family. Homohexamer. Mg(2+) serves as cofactor.

Its subcellular location is the cytoplasm. It catalyses the reaction (R)-4'-phosphopantetheine + ATP + H(+) = 3'-dephospho-CoA + diphosphate. It participates in cofactor biosynthesis; coenzyme A biosynthesis; CoA from (R)-pantothenate: step 4/5. Its function is as follows. Reversibly transfers an adenylyl group from ATP to 4'-phosphopantetheine, yielding dephospho-CoA (dPCoA) and pyrophosphate. This is Phosphopantetheine adenylyltransferase from Borrelia turicatae (strain 91E135).